Reading from the N-terminus, the 267-residue chain is Kafirin PSK8 (267 aa).

The signal sequence occupies residues 1–19; the sequence is TKIFALLALHALLVSGTTA.

It belongs to the zein family.

In terms of biological role, major seed storage prolamin. In Sorghum bicolor (Sorghum), this protein is Kafirin PSK8.